The primary structure comprises 433 residues: Trigger factor (433 aa).

The PPIase FKBP-type domain occupies 163 to 248 (GNFVVIDFVG…VKEAKVKELP (86 aa)).

This sequence belongs to the FKBP-type PPIase family. Tig subfamily.

The protein resides in the cytoplasm. It catalyses the reaction [protein]-peptidylproline (omega=180) = [protein]-peptidylproline (omega=0). Its function is as follows. Involved in protein export. Acts as a chaperone by maintaining the newly synthesized protein in an open conformation. Functions as a peptidyl-prolyl cis-trans isomerase. This is Trigger factor from Geobacter metallireducens (strain ATCC 53774 / DSM 7210 / GS-15).